The following is a 418-amino-acid chain: Putative ion-transport protein YfeO (418 aa).

12 helical membrane passes run 10–30 (LLLS…LIVV), 54–74 (DSPL…GLVI), 99–119 (ALPG…SLGP), 120–140 (EHPI…RLLP), 149–169 (ILAS…AALI), 186–206 (LFAP…FFHP), 223–243 (ILSG…AVWC), 258–278 (VLVL…GGPV), 300–320 (DYFL…ASGF), 322–342 (GGRI…LHEH), 343–363 (VPAV…VLVV), and 371–391 (LFMA…CIVM).

This sequence belongs to the chloride channel (TC 2.A.49) family.

The protein localises to the cell membrane. The sequence is that of Putative ion-transport protein YfeO from Escherichia coli O8 (strain IAI1).